The following is a 344-amino-acid chain: Succinylglutamate desuccinylase (344 aa).

His63, Glu66, and His160 together coordinate Zn(2+). Glu224 is a catalytic residue.

This sequence belongs to the AspA/AstE family. Succinylglutamate desuccinylase subfamily. The cofactor is Zn(2+).

It catalyses the reaction N-succinyl-L-glutamate + H2O = L-glutamate + succinate. It functions in the pathway amino-acid degradation; L-arginine degradation via AST pathway; L-glutamate and succinate from L-arginine: step 5/5. Transforms N(2)-succinylglutamate into succinate and glutamate. The chain is Succinylglutamate desuccinylase from Shewanella sp. (strain MR-4).